We begin with the raw amino-acid sequence, 352 residues long: Ion-translocating oxidoreductase complex subunit D (352 aa).

Transmembrane regions (helical) follow at residues 20–40, 42–62, 89–109, and 123–143; these read IMLL…WFFG, GTLV…ALVL, IPPL…VIIA, and PAMI…TSWL. Position 187 is an FMN phosphoryl threonine (T187). Helical transmembrane passes span 214–234, 242–262, 267–287, 301–321, and 322–342; these read ILAG…GLWL, WHIP…GWLF, LAAP…FFIL, LIFG…GGYP, and DGVA…DYYT.

Belongs to the NqrB/RnfD family. As to quaternary structure, the complex is composed of six subunits: RsxA, RsxB, RsxC, RsxD, RsxE and RsxG. FMN serves as cofactor.

Its subcellular location is the cell inner membrane. In terms of biological role, part of a membrane-bound complex that couples electron transfer with translocation of ions across the membrane. Required to maintain the reduced state of SoxR. The polypeptide is Ion-translocating oxidoreductase complex subunit D (Shigella boydii serotype 18 (strain CDC 3083-94 / BS512)).